The sequence spans 98 residues: NADH-ubiquinone oxidoreductase chain 4L (98 aa).

Helical transmembrane passes span 1–21 (MSMVYANIFLAFIMSLMGLLM), 29–49 (SLLCLEGMMLSLFVMMTVTIL), and 61–81 (IILLVFAACEAALGLSLLVMV).

Belongs to the complex I subunit 4L family. Core subunit of respiratory chain NADH dehydrogenase (Complex I) which is composed of 45 different subunits.

The protein resides in the mitochondrion inner membrane. It catalyses the reaction a ubiquinone + NADH + 5 H(+)(in) = a ubiquinol + NAD(+) + 4 H(+)(out). In terms of biological role, core subunit of the mitochondrial membrane respiratory chain NADH dehydrogenase (Complex I) which catalyzes electron transfer from NADH through the respiratory chain, using ubiquinone as an electron acceptor. Part of the enzyme membrane arm which is embedded in the lipid bilayer and involved in proton translocation. This Erignathus barbatus (Bearded seal) protein is NADH-ubiquinone oxidoreductase chain 4L (MT-ND4L).